Here is a 139-residue protein sequence, read N- to C-terminus: Cystatin-1 (139 aa).

An N-terminal signal peptide occupies residues 1 to 22 (MHSRLPVPASLCLLLLLPSVLP). The 101-residue stretch at 27–127 (GGLSPRDVTD…CHFEVWSRPW (101 aa)) folds into the Cystatin domain. The Secondary area of contact signature appears at 71-75 (QVVSG). Disulfide bonds link Cys89/Cys105 and Cys118/Cys138.

It belongs to the cystatin family. In terms of tissue distribution, expressed by the venom gland.

It localises to the secreted. In terms of biological role, inhibits various C1 cysteine proteases including cathepsin L, papain and cathepsin B. This protein has no toxic activity and its function in the venom is unknown. It may play a role as housekeeping or regulatory protein. This chain is Cystatin-1, found in Crotalus adamanteus (Eastern diamondback rattlesnake).